We begin with the raw amino-acid sequence, 554 residues long: MKHHLTPLDATQLDSWRALAAHRQELQDFRMRQAFIDDPERFKRFSFSACGLFLDFSKNLIRQDTIDLLVKLAEEARLSDAIRAMFDGEAINASERRPVLHTALRRPIGDKVLVDGVDVMPEVHRVLHQMTELVGYVHNGLWRGYTEKPITDVVNIGIGGSFLGPQLVSEALLPFAQKGVRCHYLANIDGSEFHELASRLNAETTLFIVSSKSFGTLETLKNAQAARAWYLAQGGTEEELYRHFIAVSSNKEAAIAFGIREENIFPMWDWVGGRYSLWSAIGLPIAMSIGISNFKELLSGAYNMDQHFQTAPFERNIPVLLGLLGVWYGDFWGANSHAILPYDYYLRNITDHLQQLDMESNGKSVRQDGTPVTSGTGPVIWGGVGCNGQHAYHQLLHQGTQLIPADFIVPVSSYNPVADHHQWLYANCLSQSQALMLGKSREEAEAELRAKGLPEAEVQRLAPHKVIPGNRPSNTLVVERISARRLGALIAMYEHKVYVQSILWGINAFDQWGVELGKELGKGVYSRLVGSEETPAEDASTQGLIDFFRGRHRG.

Residue Glu-359 is the Proton donor of the active site. Active-site residues include His-390 and Lys-518.

This sequence belongs to the GPI family.

It is found in the cytoplasm. It carries out the reaction alpha-D-glucose 6-phosphate = beta-D-fructose 6-phosphate. It functions in the pathway carbohydrate biosynthesis; gluconeogenesis. Its pathway is carbohydrate degradation; glycolysis; D-glyceraldehyde 3-phosphate and glycerone phosphate from D-glucose: step 2/4. Its function is as follows. Catalyzes the reversible isomerization of glucose-6-phosphate to fructose-6-phosphate. The chain is Glucose-6-phosphate isomerase from Pseudomonas aeruginosa (strain LESB58).